We begin with the raw amino-acid sequence, 337 residues long: Protein ABHD13 (337 aa).

Residues 30–50 traverse the membrane as a helical; Signal-anchor for type II membrane protein segment; the sequence is LLALILTFHLYGGFVLLGLIL. Residues S193, D268, and H298 each act as charge relay system in the active site. The N-linked (GlcNAc...) asparagine glycan is linked to N299.

It belongs to the serine esterase family.

Its subcellular location is the membrane. This is Protein ABHD13 from Danio rerio (Zebrafish).